We begin with the raw amino-acid sequence, 1379 residues long: Vascular endothelial growth factor receptor 3 (1379 aa).

The N-terminal stretch at 1–19 (MKRVCTLPLWLWLGIVSEA) is a signal peptide. Residues 20-788 (DLVSSYSMTP…EGSDDKTNVE (769 aa)) are Extracellular-facing. Ig-like C2-type domains lie at 30-136 (PTLS…TAVS), 160-222 (KENT…IDNK), 240-335 (DIQL…TDVI), 340-421 (PFIN…KRIS), 430-566 (PRIH…FYVT), 569-684 (PDGF…KYIS), and 691-777 (PRLK…ASVS). 2 disulfide bridges follow: cysteine 51–cysteine 120 and cysteine 167–cysteine 215. Residues 73 to 93 (RRWNSQPQQRPVGAGNPEEDC) are disordered. Residues asparagine 113, asparagine 175, asparagine 260, and asparagine 308 are each glycosylated (N-linked (GlcNAc...) asparagine). Cysteine 261 and cysteine 319 are oxidised to a cystine. 3 disulfides stabilise this stretch: cysteine 453-cysteine 548, cysteine 474-cysteine 500, and cysteine 592-cysteine 666. N-linked (GlcNAc...) asparagine glycosylation is found at asparagine 529, asparagine 541, asparagine 596, asparagine 608, asparagine 655, asparagine 696, and asparagine 703. An intrachain disulfide couples cysteine 712 to cysteine 761. Asparagine 771 carries N-linked (GlcNAc...) asparagine glycosylation. Residues 789–809 (IVILIGTGVIAVFFWILLIII) form a helical membrane-spanning segment. The Cytoplasmic segment spans residues 810–1379 (FCNIKRPAHA…LHASFFSEQY (570 aa)). One can recognise a Protein kinase domain in the interval 858–1185 (LRLGKVLGHG…DLVEILGNLL (328 aa)). ATP contacts are provided by residues 864–872 (LGHGAFGKV) and lysine 892. Aspartate 1049 serves as the catalytic Proton acceptor. Phosphotyrosine; by autocatalysis is present on residues tyrosine 1075 and tyrosine 1080. Positions 1196 to 1224 (YIPLNDSHSSEDDGFSQVPSSAQQNSDEE) are disordered. Tyrosine 1239, tyrosine 1240, tyrosine 1274, tyrosine 1342, and tyrosine 1346 each carry phosphotyrosine; by autocatalysis. The segment at 1299 to 1379 (RHRKEGGFSS…LHASFFSEQY (81 aa)) is disordered. The span at 1332-1343 (YGSQVGGQTFYN) shows a compositional bias: polar residues.

The protein belongs to the protein kinase superfamily. Tyr protein kinase family. CSF-1/PDGF receptor subfamily. Interacts with VEGFC and VEGFD. Monomer in the absence of bound VEGFC or VEGFD. Homodimer in the presence of bound VEGFC or VEGFD. Autophosphorylated on tyrosine residues upon ligand binding. Autophosphorylation occurs in trans, i.e. one subunit of the dimeric receptor phosphorylates tyrosine residues on the other subunit.

Its subcellular location is the cell membrane. It localises to the cytoplasm. The protein resides in the nucleus. The catalysed reaction is L-tyrosyl-[protein] + ATP = O-phospho-L-tyrosyl-[protein] + ADP + H(+). Its activity is regulated as follows. Present in an inactive conformation in the absence of bound ligand. Binding of VEGFC or VEGFD leads to dimerization and activation by autophosphorylation on tyrosine residues. Functionally, tyrosine-protein kinase that acts as a cell-surface receptor for VEGFC and VEGFD, and plays an essential role in lymphangiogenesis and in the development of the vascular network and the cardiovascular system during embryonic development. Promotes proliferation, survival and migration of endothelial cells, and regulates angiogenic sprouting. Mediates activation of the MAPK1/ERK2, MAPK3/ERK1 signaling pathway, of MAPK8 and the JUN signaling pathway, and of the AKT1 signaling pathway. This Coturnix coturnix (Common quail) protein is Vascular endothelial growth factor receptor 3 (FLT4).